The chain runs to 207 residues: MARYRGPKLRIVRRLGELPGLTQKNCTRDFPPGQHGPKKKGGGNQKTKESQYAVRLKEKQKLRFNYGISERQLMSYVREARKRKGSTGEILLQILEMRLDTIIFRLGFAPTIAAARQLINHGHIVVNGRRVDIPSSLCKVNDSISVALNSQNFVKNLLQSFTKTLDAPYLEVNQEKLSAVVRDNIPREAVSLQINELLVVEFYSRKV.

Positions 22 to 51 are disordered; the sequence is TQKNCTRDFPPGQHGPKKKGGGNQKTKESQ. The region spanning 97-158 is the S4 RNA-binding domain; that stretch reads MRLDTIIFRL…NSQNFVKNLL (62 aa).

Belongs to the universal ribosomal protein uS4 family. In terms of assembly, part of the 30S ribosomal subunit. Contacts protein S5. The interaction surface between S4 and S5 is involved in control of translational fidelity.

The protein resides in the plastid. The protein localises to the chloroplast. One of the primary rRNA binding proteins, it binds directly to 16S rRNA where it nucleates assembly of the body of the 30S subunit. Its function is as follows. With S5 and S12 plays an important role in translational accuracy. This Chlorella vulgaris (Green alga) protein is Small ribosomal subunit protein uS4c (rps4).